Here is a 202-residue protein sequence, read N- to C-terminus: Small ribosomal subunit protein uS4 (202 aa).

Positions 22 to 43 are disordered; the sequence is TRKSARRAYPPGQHGQNRKKRS. Residues 90–152 form the S4 RNA-binding domain; it reads MRLDNTVFRL…APSRKLVENN (63 aa).

The protein belongs to the universal ribosomal protein uS4 family. Part of the 30S ribosomal subunit. Contacts protein S5. The interaction surface between S4 and S5 is involved in control of translational fidelity.

Functionally, one of the primary rRNA binding proteins, it binds directly to 16S rRNA where it nucleates assembly of the body of the 30S subunit. Its function is as follows. With S5 and S12 plays an important role in translational accuracy. In Trichormus variabilis (strain ATCC 29413 / PCC 7937) (Anabaena variabilis), this protein is Small ribosomal subunit protein uS4.